We begin with the raw amino-acid sequence, 464 residues long: tRNA(Ile)-lysidine synthase (464 aa).

30-35 is an ATP binding site; the sequence is SGGVDS.

The protein belongs to the tRNA(Ile)-lysidine synthase family.

It localises to the cytoplasm. It carries out the reaction cytidine(34) in tRNA(Ile2) + L-lysine + ATP = lysidine(34) in tRNA(Ile2) + AMP + diphosphate + H(+). Its function is as follows. Ligates lysine onto the cytidine present at position 34 of the AUA codon-specific tRNA(Ile) that contains the anticodon CAU, in an ATP-dependent manner. Cytidine is converted to lysidine, thus changing the amino acid specificity of the tRNA from methionine to isoleucine. The polypeptide is tRNA(Ile)-lysidine synthase (Shewanella oneidensis (strain ATCC 700550 / JCM 31522 / CIP 106686 / LMG 19005 / NCIMB 14063 / MR-1)).